The sequence spans 208 residues: Uracil phosphoribosyltransferase (208 aa).

5-phospho-alpha-D-ribose 1-diphosphate contacts are provided by residues Arg78, Arg103, and 130–138 (DPMLATGGS). Residues Ile193 and 198–200 (GDA) contribute to the uracil site. Asp199 lines the 5-phospho-alpha-D-ribose 1-diphosphate pocket.

Belongs to the UPRTase family. Requires Mg(2+) as cofactor.

It catalyses the reaction UMP + diphosphate = 5-phospho-alpha-D-ribose 1-diphosphate + uracil. Its pathway is pyrimidine metabolism; UMP biosynthesis via salvage pathway; UMP from uracil: step 1/1. Its activity is regulated as follows. Allosterically activated by GTP. Functionally, catalyzes the conversion of uracil and 5-phospho-alpha-D-ribose 1-diphosphate (PRPP) to UMP and diphosphate. In Shewanella oneidensis (strain ATCC 700550 / JCM 31522 / CIP 106686 / LMG 19005 / NCIMB 14063 / MR-1), this protein is Uracil phosphoribosyltransferase.